We begin with the raw amino-acid sequence, 237 residues long: C-type lectin domain family 4 member A (237 aa).

Over 1-48 (MTSEITYAEVRFKNEFKSSGINTASSAASKERTAPHKSNTGFPKLLCA) the chain is Cytoplasmic. The short motif at 5 to 10 (ITYAEV) is the ITIM motif element. Residues 49-69 (SLLIFFLLLAISFFIAFVIFF) traverse the membrane as a helical; Signal-anchor for type II membrane protein segment. The Extracellular segment spans residues 70-237 (QKYSQLLEKK…SVCEMMKIHL (168 aa)). Disulfide bonds link Cys-106/Cys-117, Cys-134/Cys-230, and Cys-203/Cys-222. One can recognise a C-type lectin domain in the interval 113–231 (FSSNCYFIST…CLGPQRSVCE (119 aa)). Ca(2+)-binding residues include Val-143, Asn-145, and Glu-149. Residue Asn-185 is glycosylated (N-linked (GlcNAc...) asparagine). Ca(2+)-binding residues include Glu-195, Ser-197, and Glu-201. Alpha-D-mannopyranose contacts are provided by residues 195–197 (EPS) and Glu-201. 207–209 (NFR) lines the N-acetyl-D-glucosamine pocket. Positions 218, 219, and 231 each coordinate Ca(2+).

May interact with PTPN6 via its ITIM motif. Expressed preferentially in hematopoietic tissues. Expressed in all circulating Ag-presenting cells such as dendritic cells, myeloid cells, monocytes, macrophages, B-cells and epidermal Langerhans cells (at protein level). Expressed in peripheral blood leukocytes, neutrophils, moderate quantities in spleen, lymph node, and bone marrow, and at very low levels in thymus.

The protein localises to the cell membrane. C-type lectin receptor that binds carbohydrates mannose and fucose but also weakly interacts with N-acetylglucosamine (GlcNAc) in a Ca(2+)-dependent manner. Involved in regulating immune reactivity. Once triggered by antigen, it is internalized by clathrin-dependent endocytosis and delivers its antigenic cargo into the antigen presentation pathway resulting in cross-priming of CD8(+) T cells. This cross-presentation and cross-priming are enhanced by TLR7 and TLR8 agonists with increased expansion of the CD8(+) T cells, high production of IFNG and TNF with reduced levels of IL4, IL5 and IL13. In plasmacytoid dendritic cells, inhibits TLR9-mediated IFNA and TNF production. May be involved via its ITIM motif (immunoreceptor tyrosine-based inhibitory motifs) in the inhibition of B-cell-receptor-mediated calcium mobilization and protein tyrosine phosphorylation. In terms of biological role, (Microbial infection) Involved in the interaction between HIV-1 virus and dendritic cells. Enhances HIV-1 binding/entry and virus infection. Requires ITIM motif-associated signal transduction pathway involving phosphatases PTPN6 and PTPN11, SYK, Src kinases and MAP kinases. In Homo sapiens (Human), this protein is C-type lectin domain family 4 member A.